The following is a 294-amino-acid chain: Coiled-coil domain-containing protein 69 (294 aa).

Residues methionine 1–aspartate 43 form a disordered region. Glycine 2 carries the N-myristoyl glycine lipid modification. Basic and acidic residues predominate over residues arginine 20 to proline 29. Residues alanine 47–valine 270 are a coiled coil. 2 positions are modified to phosphoserine: serine 152 and serine 239.

The protein belongs to the CCDC69 family.

The protein resides in the cytoplasm. The protein localises to the cytoskeleton. It is found in the spindle. Its subcellular location is the midbody. May act as a scaffold to regulate the recruitment and assembly of spindle midzone components. Required for the localization of AURKB and PLK1 to the spindle midzone. The polypeptide is Coiled-coil domain-containing protein 69 (CCDC69) (Bos taurus (Bovine)).